We begin with the raw amino-acid sequence, 443 residues long: Oxygen-dependent coproporphyrinogen-III oxidase, mitochondrial (443 aa).

Residues 1 to 98 (MALRLGQLGS…EMVPKSSGAR (98 aa)) constitute a mitochondrion transit peptide. A disordered region spans residues 90–111 (MVPKSSGARSPSPGRLEEDGDE). Serine 101 carries the post-translational modification Phosphoserine. The segment at 182-191 (VLQDGRVFEK) is important for dimerization. Serine 233 is a binding site for coproporphyrinogen III. The Proton donor role is filled by histidine 247. 249–251 (NYR) contacts coproporphyrinogen III. The segment at 381–417 (YVEFNLVYDRGTKFGLFTPGSRIESILMSLPLTARWE) is important for dimerization. Position 393 is an N6-acetyllysine; alternate (lysine 393). Lysine 393 bears the N6-succinyllysine; alternate mark. Position 400 to 402 (400 to 402 (GSR)) interacts with coproporphyrinogen III.

It belongs to the aerobic coproporphyrinogen-III oxidase family. In terms of assembly, homodimer.

It localises to the mitochondrion intermembrane space. The enzyme catalyses coproporphyrinogen III + O2 + 2 H(+) = protoporphyrinogen IX + 2 CO2 + 2 H2O. The protein operates within porphyrin-containing compound metabolism; protoporphyrin-IX biosynthesis; protoporphyrinogen-IX from coproporphyrinogen-III (O2 route): step 1/1. Its function is as follows. Involved in the heme biosynthesis. Catalyzes the aerobic oxidative decarboxylation of propionate groups of rings A and B of coproporphyrinogen-III to yield the vinyl groups in protoporphyrinogen-IX. The polypeptide is Oxygen-dependent coproporphyrinogen-III oxidase, mitochondrial (Rattus norvegicus (Rat)).